The sequence spans 415 residues: Gamma-glutamyl phosphate reductase (415 aa).

The protein belongs to the gamma-glutamyl phosphate reductase family.

The protein resides in the cytoplasm. The catalysed reaction is L-glutamate 5-semialdehyde + phosphate + NADP(+) = L-glutamyl 5-phosphate + NADPH + H(+). The protein operates within amino-acid biosynthesis; L-proline biosynthesis; L-glutamate 5-semialdehyde from L-glutamate: step 2/2. Functionally, catalyzes the NADPH-dependent reduction of L-glutamate 5-phosphate into L-glutamate 5-semialdehyde and phosphate. The product spontaneously undergoes cyclization to form 1-pyrroline-5-carboxylate. This Desulforamulus reducens (strain ATCC BAA-1160 / DSM 100696 / MI-1) (Desulfotomaculum reducens) protein is Gamma-glutamyl phosphate reductase.